The sequence spans 196 residues: PRADC1-like protein (196 aa).

Residues 1–18 (MLIAWLVLAATLSRSIRA) form the signal peptide. Residues 73-171 (ITDPPGACQE…STLQRLKRVH (99 aa)) form the PA domain. An N-linked (GlcNAc...) asparagine glycan is attached at Asn-179.

Its subcellular location is the secreted. In terms of biological role, may be involved in iversification of muscle cell fates. The chain is PRADC1-like protein from Drosophila melanogaster (Fruit fly).